Here is a 772-residue protein sequence, read N- to C-terminus: Metal transporter CNNM4 (772 aa).

Over 1 to 175 the chain is Extracellular; it reads MAPGGGGGRR…SLLFMVEEHG (175 aa). Residue asparagine 120 is glycosylated (N-linked (GlcNAc...) asparagine). Residues 176 to 196 form a helical membrane-spanning segment; that stretch reads RFLPLWLHILLVLVLLVLSGI. Residues 176–356 form the CNNM transmembrane domain; that stretch reads RFLPLWLHIL…EPYNDLVKEE (181 aa). Over 197–237 the chain is Cytoplasmic; the sequence is FSGLNLGLMALDPMELRIVQNCGTEKERRYARKIEPIRRKG. Positions 238–258 form an intramembrane region, helical; sequence NYLLCSLLLGNVLVNTSLTIL. The Cytoplasmic segment spans residues 259–261; sequence LDN. A helical transmembrane segment spans residues 262–282; it reads LIGSGIMAVASSTIGIVIFGE. The Extracellular segment spans residues 283 to 290; it reads ILPQALCS. A helical membrane pass occupies residues 291-313; that stretch reads RHGLAVGANTIVLTKIFMLLTFP. At 314–772 the chain is on the cytoplasmic side; it reads LSFPISKLLD…LHRASQEGTI (459 aa). CBS domains follow at residues 375-436 and 443-509; these read MTQL…CTPL and YNHP…ILDE. The segment at 647–676 is disordered; the sequence is PDRSPAHPTPLSRSASLSYPDRNTDMTPSS. Phosphoserine occurs at positions 658, 662, and 767.

The protein belongs to the ACDP family. As to quaternary structure, interacts with COX11. In terms of tissue distribution, present in spinal cord dorsal horn neurons and in developing teeth (at protein level). In the tooth, higher expression is found in the ameloblasts during the transition and maturation phases of amelogenesis; reduced expression in the odontoblasts.

It localises to the cell membrane. Functionally, probable metal transporter. The interaction with the metal ion chaperone COX11 suggests that it may play a role in sensory neuron functions. May play a role in biomineralization and retinal function. This is Metal transporter CNNM4 (Cnnm4) from Rattus norvegicus (Rat).